The primary structure comprises 765 residues: Putative U-box domain-containing protein 50 (765 aa).

A coiled-coil region spans residues 198–391 (QEIENYFQQL…NRRIEFCKER (194 aa)). The Protein kinase domain maps to 422–765 (SDRLRLKSGG…HSKRAAQASS (344 aa)). Residues 428–436 (KSGGNWTNV) and Lys449 each bind ATP. Positions 688–762 (DIPSVFMCPI…QDWHSKRAAQ (75 aa)) constitute a U-box domain.

Belongs to the protein kinase superfamily. Ser/Thr protein kinase family.

The catalysed reaction is S-ubiquitinyl-[E2 ubiquitin-conjugating enzyme]-L-cysteine + [acceptor protein]-L-lysine = [E2 ubiquitin-conjugating enzyme]-L-cysteine + N(6)-ubiquitinyl-[acceptor protein]-L-lysine.. It functions in the pathway protein modification; protein ubiquitination. Functions as an E3 ubiquitin ligase. The polypeptide is Putative U-box domain-containing protein 50 (PUB50) (Arabidopsis thaliana (Mouse-ear cress)).